The following is an 801-amino-acid chain: Mitochondrial intermediate peptidase (801 aa).

Residues 1–41 constitute a mitochondrion transit peptide; it reads MKDQLLVPLRRRPWTCQKCLQRLQLPRHQTRRSFETAASPF. A Zn(2+)-binding site is contributed by His-564. The active site involves Glu-565. 2 residues coordinate Zn(2+): His-568 and His-571.

The protein belongs to the peptidase M3 family. Requires Zn(2+) as cofactor.

It is found in the mitochondrion matrix. It carries out the reaction Release of an N-terminal octapeptide as second stage of processing of some proteins imported into the mitochondrion.. Cleaves proteins, imported into the mitochondrion, to their mature size. While most mitochondrial precursor proteins are processed to the mature form in one step by mitochondrial processing peptidase (MPP), the sequential cleavage by MIP of an octapeptide after initial processing by MPP is a required step for a subgroup of nuclear-encoded precursor proteins destined for the matrix or the inner membrane. The chain is Mitochondrial intermediate peptidase (oct1) from Aspergillus fumigatus (strain ATCC MYA-4609 / CBS 101355 / FGSC A1100 / Af293) (Neosartorya fumigata).